Reading from the N-terminus, the 448-residue chain is Chromosomal replication initiator protein DnaA (448 aa).

The domain I, interacts with DnaA modulators stretch occupies residues Met1–Lys73. Residues Lys73–Thr109 are domain II. The interval Met110–Ser326 is domain III, AAA+ region. 4 residues coordinate ATP: Gly154, Gly156, Lys157, and Thr158. The domain IV, binds dsDNA stretch occupies residues Ser327 to Lys448.

It belongs to the DnaA family. Oligomerizes as a right-handed, spiral filament on DNA at oriC.

It is found in the cytoplasm. In terms of biological role, plays an essential role in the initiation and regulation of chromosomal replication. ATP-DnaA binds to the origin of replication (oriC) to initiate formation of the DNA replication initiation complex once per cell cycle. Binds the DnaA box (a 9 base pair repeat at the origin) and separates the double-stranded (ds)DNA. Forms a right-handed helical filament on oriC DNA; dsDNA binds to the exterior of the filament while single-stranded (ss)DNA is stabiized in the filament's interior. The ATP-DnaA-oriC complex binds and stabilizes one strand of the AT-rich DNA unwinding element (DUE), permitting loading of DNA polymerase. After initiation quickly degrades to an ADP-DnaA complex that is not apt for DNA replication. Binds acidic phospholipids. This chain is Chromosomal replication initiator protein DnaA, found in Clostridium botulinum (strain 657 / Type Ba4).